Consider the following 600-residue polypeptide: Estrogen receptor (600 aa).

Residues 1 to 189 form a modulating (transactivation AF-1); mediates interaction with MACROD1 region; that stretch reads MTMTLHTKAS…IMESAKETRY (189 aa). Residue S10 is glycosylated (O-linked (GlcNAc) serine). Residues 35-47 form a required for interaction with NCOA1 region; it reads MERALGEVYVDNS. The interaction with DDX5; self-association stretch occupies residues 35–179; sequence MERALGEVYV…LSSSSEKGNM (145 aa). 2 positions are modified to phosphoserine; by CDK2: S109 and S111. S123 is subject to Phosphoserine. Residues 148–177 form a disordered region; the sequence is DTGPPAFYRSNSDNRRQNGRERLSSSSEKG. A compositionally biased stretch (basic and acidic residues) spans 159-170; it reads SDNRRQNGRERL. A Phosphoserine; by CK2 modification is found at S172. 2 NR C4-type zinc fingers span residues 190–210 and 226–250; these read CAVC…CEGC and CPAT…LRKC. The nuclear receptor DNA-binding region spans 190–255; that stretch reads CAVCNDYASG…RLRKCYEVGM (66 aa). Residues 190–315 form a mediates interaction with DNTTIP2 region; sequence CAVCNDYASG…TKKNSPALSL (126 aa). The interval 256–315 is hinge; sequence MKGGIRKDRRGGRMLKHKRQRDDLEGRNEMGTSGDMRAANLWPSPLVIKHTKKNSPALSL. Position 265 is an asymmetric dimethylarginine; by PRMT1 (R265). Residues 267 to 600 are interaction with AKAP13; the sequence is GRMLKHKRQR…PEAEGFPNTI (334 aa). The self-association stretch occupies residues 269–600; the sequence is MLKHKRQRDD…PEAEGFPNTI (332 aa). Positions 316–552 constitute an NR LBD domain; sequence TADQMVSALL…DLLLEMLDAH (237 aa). Residues 316–600 are transactivation AF-2; it reads TADQMVSALL…PEAEGFPNTI (285 aa). 17beta-estradiol contacts are provided by E358 and R399. A lipid anchor (S-palmitoyl cysteine) is attached at C452. H529 serves as a coordination point for 17beta-estradiol. Y542 carries the phosphotyrosine; by Tyr-kinases modification. The segment at 558 to 581 is disordered; the sequence is ASRMGVPPEEPSQSQLTTTSSTSA. Residues 569 to 581 show a composition bias toward low complexity; the sequence is SQSQLTTTSSTSA. The O-linked (GlcNAc) threonine glycan is linked to T576.

This sequence belongs to the nuclear hormone receptor family. NR3 subfamily. Interacts with BCAS3. Binds DNA as a homodimer. Can form a heterodimer with ESR2. Interacts with coactivator NCOA5. Interacts with PELP1, the interaction is enhanced by 17-beta-estradiol; the interaction increases ESR1 transcriptional activity. Interacts with NCOA7; the interaction is ligand-inducible. Interacts with AKAP13, CUEDC2, HEXIM1, KDM5A, MAP1S, SMARD1, and UBE1C. Interacts with MUC1; the interaction is stimulated by 7 beta-estradiol (E2) and enhances ESR1-mediated transcription. Interacts with DNTTIP2, and UIMC1. Interacts with KMT2D/MLL2. Interacts with ATAD2; the interaction is enhanced by estradiol. Interacts with KIF18A and LDB1. Interacts with RLIM (via its C-terminus). Interacts with MACROD1. Interacts with SH2D4A and PLCG. Interacts with SH2D4A; the interaction blocks binding to PLCG and inhibits estrogen-induced cell proliferation. Interacts with DYNLL1. Interacts with CCDC62; the interaction requires estradiol and appears to enhance the transcription of target genes. Interacts with NR2C1; the interaction prevents homodimerization of ESR1 and suppresses its transcriptional activity and cell growth. Interacts with DNAAF4. Interacts with PRMT2. Interacts with RBFOX2. Interacts with EP300; the interaction is estrogen-dependent and enhanced by CITED1. Interacts with CITED1; the interaction is estrogen-dependent. Interacts with FAM120B, FOXL2, PHB2 and SLC30A9. Interacts with coactivators NCOA3 and NCOA6. Interacts with STK3/MST2 only in the presence of SAV1 and vice-versa. Binds to CSNK1D. Interacts with NCOA2; NCOA2 can interact with ESR1 AF-1 and AF-2 domains simultaneously and mediate their transcriptional synergy. Interacts with DDX5. Interacts with NCOA1; the interaction seems to require a self-association of N-terminal and C-terminal regions. Interacts with ZNF366, DDX17, NFKB1, RELA, SP1 and SP3. Interacts with NRIP1. Interacts with GPER1; the interaction occurs in an estrogen-dependent manner. Interacts with TRIP4 (ufmylated); estrogen dependent. Interacts with LMTK3; the interaction phosphorylates ESR1 (in vitro) and protects it against proteasomal degradation. Interacts with CCAR2 (via N-terminus) in a ligand-independent manner. Interacts with ZFHX3. Interacts with SFR1 in a ligand-dependent and -independent manner. Interacts with DCAF13, LATS1 and DCAF1; regulates ESR1 ubiquitination and ubiquitin-mediated proteasomal degradation. Interacts (via DNA-binding domain) with POU4F2 (C-terminus); this interaction increases the estrogen receptor ESR1 transcriptional activity in a DNA- and ligand 17-beta-estradiol-independent manner. Interacts with ESRRB isoform 1. Interacts with UBE3A and WBP2. Interacts with GTF2B. Interacts with RBM39. In the absence of hormonal ligand, interacts with TACC1. Interacts with PI3KR1 or PI3KR2 and PTK2/FAK1. Interacts with SRC. Interacts with BAG1; the interaction is promoted in the absence of estradiol (17-beta-estradiol/E2). Interacts with and ubiquitinated by STUB1; the interaction is promoted in the absence of estradiol (17-beta-estradiol/E2). Interacts with NEDD8. Post-translationally, phosphorylated by cyclin A/CDK2 and CK1. Phosphorylation probably enhances transcriptional activity. Dephosphorylation at Ser-123 by PPP5C inhibits its transactivation activity. Phosphorylated by LMTK3 (in vitro). Ubiquitinated; regulated by LATS1 via DCAF1 it leads to ESR1 proteasomal degradation. Deubiquitinated by OTUB1. Ubiquitinated by STUB1/CHIP; in the CA1 hippocampal region following loss of endogenous circulating estradiol (17-beta-estradiol/E2). Ubiquitinated by UBR5, leading to its degradation: UBR5 specifically recognizes and binds ligand-bound ESR1 when it is not associated with coactivators (NCOAs). In presence of NCOAs, the UBR5-degron is not accessible, preventing its ubiquitination and degradation. In terms of processing, palmitoylated at Cys-452 by ZDHHC7 and ZDHHC21. This modification is required for plasma membrane targeting and for rapid intracellular signaling via ERK and AKT kinases and cAMP generation, but not for signaling mediated by the nuclear hormone receptor. Post-translationally, dimethylated by PRMT1 at Arg-265. The methylation may favor cytoplasmic localization. Demethylated by JMJD6 at Arg-265. As to expression, expressed in the CA1 region of the hippocampus, expression decreases with age (at protein level). Expressed in the uterus (at protein level).

It localises to the nucleus. The protein resides in the cytoplasm. Its subcellular location is the golgi apparatus. It is found in the cell membrane. Functionally, nuclear hormone receptor. The steroid hormones and their receptors are involved in the regulation of eukaryotic gene expression and affect cellular proliferation and differentiation in target tissues. Ligand-dependent nuclear transactivation involves either direct homodimer binding to a palindromic estrogen response element (ERE) sequence or association with other DNA-binding transcription factors, such as AP-1/c-Jun, c-Fos, ATF-2, Sp1 and Sp3, to mediate ERE-independent signaling. Ligand binding induces a conformational change allowing subsequent or combinatorial association with multiprotein coactivator complexes through LXXLL motifs of their respective components. Mutual transrepression occurs between the estrogen receptor (ER) and NF-kappa-B in a cell-type specific manner. Decreases NF-kappa-B DNA-binding activity and inhibits NF-kappa-B-mediated transcription from the IL6 promoter and displace RELA/p65 and associated coregulators from the promoter. Recruited to the NF-kappa-B response element of the CCL2 and IL8 promoters and can displace CREBBP. Present with NF-kappa-B components RELA/p65 and NFKB1/p50 on ERE sequences. Can also act synergistically with NF-kappa-B to activate transcription involving respective recruitment adjacent response elements; the function involves CREBBP. Can activate the transcriptional activity of TFF1. Also mediates membrane-initiated estrogen signaling involving various kinase cascades. Essential for MTA1-mediated transcriptional regulation of BRCA1 and BCAS3. Maintains neuronal survival in response to ischemic reperfusion injury when in the presence of circulating estradiol (17-beta-estradiol/E2). In Rattus norvegicus (Rat), this protein is Estrogen receptor (Esr1).